We begin with the raw amino-acid sequence, 512 residues long: Apolipoprotein N-acyltransferase (512 aa).

6 helical membrane passes run 5-25, 56-76, 92-112, 118-138, 168-188, and 195-215; these read LDKY…FAAA, FAVS…FYWI, VPLT…CFWL, LPRG…TEFA, LGGI…LVLA, and SGKR…GYTA. Positions 233-477 constitute a CN hydrolase domain; the sequence is LQGNIDQTLK…ETVLEGHIKG (245 aa). Glutamate 271 (proton acceptor) is an active-site residue. Lysine 337 is a catalytic residue. Residue cysteine 389 is the Nucleophile of the active site. The helical transmembrane segment at 487–507 threads the bilayer; it reads TGSSWWLMGILALAALILFIF.

Belongs to the CN hydrolase family. Apolipoprotein N-acyltransferase subfamily.

The protein localises to the cell inner membrane. It carries out the reaction N-terminal S-1,2-diacyl-sn-glyceryl-L-cysteinyl-[lipoprotein] + a glycerophospholipid = N-acyl-S-1,2-diacyl-sn-glyceryl-L-cysteinyl-[lipoprotein] + a 2-acyl-sn-glycero-3-phospholipid + H(+). It participates in protein modification; lipoprotein biosynthesis (N-acyl transfer). Catalyzes the phospholipid dependent N-acylation of the N-terminal cysteine of apolipoprotein, the last step in lipoprotein maturation. The polypeptide is Apolipoprotein N-acyltransferase (Neisseria meningitidis serogroup B (strain ATCC BAA-335 / MC58)).